A 597-amino-acid polypeptide reads, in one-letter code: Elongation factor 4 (597 aa).

Residues 2–184 enclose the tr-type G domain; it reads KHIRNFSIIA…KIVSAIPAPE (183 aa). GTP is bound by residues 14-19 and 131-134; these read DHGKST and NKID.

It belongs to the TRAFAC class translation factor GTPase superfamily. Classic translation factor GTPase family. LepA subfamily.

It is found in the cell inner membrane. The catalysed reaction is GTP + H2O = GDP + phosphate + H(+). In terms of biological role, required for accurate and efficient protein synthesis under certain stress conditions. May act as a fidelity factor of the translation reaction, by catalyzing a one-codon backward translocation of tRNAs on improperly translocated ribosomes. Back-translocation proceeds from a post-translocation (POST) complex to a pre-translocation (PRE) complex, thus giving elongation factor G a second chance to translocate the tRNAs correctly. Binds to ribosomes in a GTP-dependent manner. In Vibrio vulnificus (strain CMCP6), this protein is Elongation factor 4.